A 555-amino-acid polypeptide reads, in one-letter code: Formate--tetrahydrofolate ligase (555 aa).

Threonine 65–serine 72 contributes to the ATP binding site.

Belongs to the formate--tetrahydrofolate ligase family.

It catalyses the reaction (6S)-5,6,7,8-tetrahydrofolate + formate + ATP = (6R)-10-formyltetrahydrofolate + ADP + phosphate. It functions in the pathway one-carbon metabolism; tetrahydrofolate interconversion. The chain is Formate--tetrahydrofolate ligase from Staphylococcus aureus (strain NCTC 8325 / PS 47).